A 325-amino-acid polypeptide reads, in one-letter code: NADH-quinone oxidoreductase subunit H (325 aa).

9 helical membrane-spanning segments follow: residues 11–31 (ILLS…CGAF), 50–69 (NRVG…KMFF), 81–101 (VIFT…FAIV), 114–134 (IGIL…LFAG), 154–174 (VSYE…AGSF), 186–206 (LWNV…GVAV), 237–257 (FFVG…TLFF), 265–285 (LPPF…FILI), and 304–324 (VCLP…LWQA).

The protein belongs to the complex I subunit 1 family. NDH-1 is composed of 13 different subunits. Subunits NuoA, H, J, K, L, M, N constitute the membrane sector of the complex.

The protein resides in the cell inner membrane. The enzyme catalyses a quinone + NADH + 5 H(+)(in) = a quinol + NAD(+) + 4 H(+)(out). Its function is as follows. NDH-1 shuttles electrons from NADH, via FMN and iron-sulfur (Fe-S) centers, to quinones in the respiratory chain. The immediate electron acceptor for the enzyme in this species is believed to be ubiquinone. Couples the redox reaction to proton translocation (for every two electrons transferred, four hydrogen ions are translocated across the cytoplasmic membrane), and thus conserves the redox energy in a proton gradient. This subunit may bind ubiquinone. The polypeptide is NADH-quinone oxidoreductase subunit H (Salmonella arizonae (strain ATCC BAA-731 / CDC346-86 / RSK2980)).